A 563-amino-acid polypeptide reads, in one-letter code: Arginine--tRNA ligase (563 aa).

Positions proline 120–histidine 130 match the 'HIGH' region motif.

Belongs to the class-I aminoacyl-tRNA synthetase family. Monomer.

The protein localises to the cytoplasm. It carries out the reaction tRNA(Arg) + L-arginine + ATP = L-arginyl-tRNA(Arg) + AMP + diphosphate. The polypeptide is Arginine--tRNA ligase (Clostridium botulinum (strain Alaska E43 / Type E3)).